Reading from the N-terminus, the 847-residue chain is DNA ligase (847 aa).

A compositionally biased stretch (low complexity) spans 1–22 (MSDTTTGSDAADAAVPATTPAD). Residues 1-23 (MSDTTTGSDAADAAVPATTPADL) are disordered. NAD(+)-binding positions include 54 to 58 (DAEYD), 104 to 105 (SL), and E135. The N6-AMP-lysine intermediate role is filled by K137. NAD(+)-binding residues include R158, E195, K326, and K350. 4 residues coordinate Zn(2+): C444, C447, C463, and C469. Residues 686–775 (AAGGVLAGLA…PDAIALPEAD (90 aa)) form the BRCT domain. The segment at 770–847 (ALPEADPVPD…AEPDGPAETP (78 aa)) is disordered. 2 stretches are compositionally biased toward low complexity: residues 786–807 (DGGSAEDATAATAGAAEAATAE) and 819–833 (PAAAAAAPPTDVEAG).

This sequence belongs to the NAD-dependent DNA ligase family. LigA subfamily. Mg(2+) is required as a cofactor. The cofactor is Mn(2+).

The enzyme catalyses NAD(+) + (deoxyribonucleotide)n-3'-hydroxyl + 5'-phospho-(deoxyribonucleotide)m = (deoxyribonucleotide)n+m + AMP + beta-nicotinamide D-nucleotide.. Its function is as follows. DNA ligase that catalyzes the formation of phosphodiester linkages between 5'-phosphoryl and 3'-hydroxyl groups in double-stranded DNA using NAD as a coenzyme and as the energy source for the reaction. It is essential for DNA replication and repair of damaged DNA. In Clavibacter sepedonicus (Clavibacter michiganensis subsp. sepedonicus), this protein is DNA ligase.